We begin with the raw amino-acid sequence, 677 residues long: Transketolase 1 (677 aa).

Histidine 27 provides a ligand contact to substrate. Residues histidine 66 and 114–116 each bind thiamine diphosphate; that span reads GPL. Residue aspartate 155 participates in Mg(2+) binding. Positions 156 and 185 each coordinate thiamine diphosphate. 2 residues coordinate Mg(2+): asparagine 185 and isoleucine 187. Residues histidine 261, arginine 356, and serine 383 each contribute to the substrate site. Thiamine diphosphate is bound at residue histidine 261. 2 residues coordinate thiamine diphosphate: glutamate 415 and phenylalanine 442. The Proton donor role is filled by glutamate 415. Substrate-binding residues include histidine 466, aspartate 474, and arginine 525.

This sequence belongs to the transketolase family. As to quaternary structure, homodimer. Mg(2+) serves as cofactor. The cofactor is Ca(2+). It depends on Mn(2+) as a cofactor. Co(2+) is required as a cofactor. Requires thiamine diphosphate as cofactor.

It carries out the reaction D-sedoheptulose 7-phosphate + D-glyceraldehyde 3-phosphate = aldehydo-D-ribose 5-phosphate + D-xylulose 5-phosphate. Catalyzes the transfer of a two-carbon ketol group from a ketose donor to an aldose acceptor, via a covalent intermediate with the cofactor thiamine pyrophosphate. This is Transketolase 1 (TKT1) from Candida albicans (Yeast).